A 68-amino-acid polypeptide reads, in one-letter code: Metallothionein-3 (68 aa).

M1 is subject to N-acetylmethionine. Positions 1–30 are beta; the sequence is MDPETCPCPSGGSCTCADSCKCEGCKCTSC. Residues C6, C8, C14, C16, C20, C22, C25, C27, and C30 each coordinate a divalent metal cation. The interval 31-68 is alpha; it reads KKSCCSCCPAECEKCAKDCVCKGGEGAEAEAEKCSCCE. S33 is subject to Phosphoserine. C34, C35, C37, C38, C42, C45, C49, C51, C64, C66, and C67 together coordinate a divalent metal cation.

The protein belongs to the metallothionein superfamily. Type 1 family.

Binds heavy metals. Contains five zinc and one copper atoms per polypeptide chain and only a negligible amount of cadmium. This Macaca fascicularis (Crab-eating macaque) protein is Metallothionein-3 (MT3).